Reading from the N-terminus, the 238-residue chain is Ribosomal RNA small subunit methyltransferase G (238 aa).

S-adenosyl-L-methionine is bound by residues Gly77, Phe82, 128–129 (AE), and Arg146. The segment at 216 to 238 (KKRQTPKKYPRKPGTPNKEPLLK) is disordered.

This sequence belongs to the methyltransferase superfamily. RNA methyltransferase RsmG family.

The protein localises to the cytoplasm. In terms of biological role, specifically methylates the N7 position of guanine in position 535 of 16S rRNA. In Macrococcus caseolyticus (strain JCSC5402) (Macrococcoides caseolyticum), this protein is Ribosomal RNA small subunit methyltransferase G.